The following is a 308-amino-acid chain: Growth/differentiation factor 15 (308 aa).

Residues 1-29 (MPGQELKTLNGSQMLLVLLVLLWPPHGGA) form the signal peptide. Residues 30–192 (VSLAEASRAS…HLRPRASRGR (163 aa)) constitute a propeptide that is removed on maturation. The N-linked (GlcNAc...) asparagine glycan is linked to Asn-70. Residues 152-179 (APALHLRLSPPPSQSDQLLVKSSSSRPQ) form a disordered region. Residues 165-178 (QSDQLLVKSSSSRP) are compositionally biased toward polar residues. 4 disulfide bridges follow: Cys-203/Cys-210, Cys-211/Cys-274, Cys-240/Cys-305, and Cys-244/Cys-307.

This sequence belongs to the TGF-beta family. Homodimer; disulfide-linked. Interacts with GFRAL and RET; ligand of GFRAL, which mediates GDF15 internalization and cellular signaling through interaction with RET via the formation of a 2:2:2 ternary complex composed of GDF15, GFRAL and RET. In terms of tissue distribution, detected in plasma (at protein level).

Its subcellular location is the secreted. Hormone produced in response to various stresses to confer information about those stresses to the brain, and trigger an aversive response, characterized by nausea and/or loss of appetite. The aversive response is both required to reduce continuing exposure to those stresses at the time of exposure and to promote avoidance behavior in the future. Acts by binding to its receptor, GFRAL, activating GFRAL-expressing neurons localized in the area postrema and nucleus tractus solitarius of the brainstem. It then triggers the activation of neurons localized within the parabrachial nucleus and central amygdala, which constitutes part of the 'emergency circuit' that shapes responses to stressful conditions. The GDF15-GFRAL signal induces expression of genes involved in metabolism, such as lipid metabolism in adipose tissues. Required for avoidance behavior in response to food allergens: induced downstream of mast cell activation to promote aversion and minimize harmful effects of exposure to noxious substances. In addition to suppress appetite, also promotes weight loss by enhancing energy expenditure in muscle: acts by increasing calcium futile cycling in muscle. Contributes to the effect of metformin, an anti-diabetic drug, on appetite reduction and weight loss: produced in the kidney in response to metformin treatment, thereby activating the GDF15-GFRAL response, leading to reduced appetite and weight. Produced in response to anticancer drugs, such as camptothecin or cisplatin, promoting nausea and contributing to malnutrition. Overproduced in many cancers, promoting anorexia in cancer (cachexia). Responsible for the risk of nausea during pregnancy: high levels of GDF15 during pregnancy, mostly originating from embryos, are associated with increased nausea. Maternal sensitivity to nausea is probably determined by pre-pregnancy exposure to GDF15, females with naturally high level of GDF15 being less susceptible to nausea than females with low levels of GDF15 before pregnancy. Promotes metabolic adaptation in response to systemic inflammation caused by bacterial and viral infections in order to promote tissue tolerance and prevent tissue damage. Inhibits growth hormone signaling on hepatocytes. In Macaca fascicularis (Crab-eating macaque), this protein is Growth/differentiation factor 15.